The following is an 82-amino-acid chain: RNA-binding protein TTE2299 (82 aa).

This sequence belongs to the eukaryotic ribosomal protein eL8 family.

The sequence is that of RNA-binding protein TTE2299 from Caldanaerobacter subterraneus subsp. tengcongensis (strain DSM 15242 / JCM 11007 / NBRC 100824 / MB4) (Thermoanaerobacter tengcongensis).